The sequence spans 382 residues: 1-deoxy-D-xylulose 5-phosphate reductoisomerase (382 aa).

Thr-10, Gly-11, Ser-12, Ile-13, Asn-38, and Asn-120 together coordinate NADPH. 1-deoxy-D-xylulose 5-phosphate is bound at residue Lys-121. Residue Glu-122 coordinates NADPH. Residue Asp-146 coordinates Mn(2+). 1-deoxy-D-xylulose 5-phosphate contacts are provided by Ser-147, Glu-148, Ser-172, and His-195. Glu-148 provides a ligand contact to Mn(2+). An NADPH-binding site is contributed by Gly-201. 1-deoxy-D-xylulose 5-phosphate-binding residues include Ser-208, Asn-213, Lys-214, and Glu-217. Glu-217 contributes to the Mn(2+) binding site.

This sequence belongs to the DXR family. Requires Mg(2+) as cofactor. It depends on Mn(2+) as a cofactor.

The enzyme catalyses 2-C-methyl-D-erythritol 4-phosphate + NADP(+) = 1-deoxy-D-xylulose 5-phosphate + NADPH + H(+). It functions in the pathway isoprenoid biosynthesis; isopentenyl diphosphate biosynthesis via DXP pathway; isopentenyl diphosphate from 1-deoxy-D-xylulose 5-phosphate: step 1/6. Its function is as follows. Catalyzes the NADPH-dependent rearrangement and reduction of 1-deoxy-D-xylulose-5-phosphate (DXP) to 2-C-methyl-D-erythritol 4-phosphate (MEP). The polypeptide is 1-deoxy-D-xylulose 5-phosphate reductoisomerase (Thermoanaerobacter sp. (strain X514)).